The chain runs to 935 residues: C-1-tetrahydrofolate synthase, cytoplasmic (935 aa).

At methionine 1 the chain carries N-acetylmethionine. The segment at 2–291 is methylenetetrahydrofolate dehydrogenase and methenyltetrahydrofolate cyclohydrolase (D/C) domain; sequence APAGILNGKL…MLMQSTVESA (290 aa). Substrate-binding positions include 52–56 and 99–101; these read YINVK and VQL. Lysine 56 is an active-site residue. Residues 172–174 and serine 197 contribute to the NADP(+) site; that span reads GRS. Residue 272-276 participates in substrate binding; sequence PGGVG. The segment at 310–935 is formyltetrahydrofolate synthetase domain; that stretch reads LNLKTPVPSD…PETEQVNGLF (626 aa). The residue at position 318 (serine 318) is a Phosphoserine. Residue 380–387 coordinates ATP; it reads TPLGEGKS. A phosphoserine mark is found at serine 413 and serine 490.

In the N-terminal section; belongs to the tetrahydrofolate dehydrogenase/cyclohydrolase family. It in the C-terminal section; belongs to the formate--tetrahydrofolate ligase family. Homodimer.

The protein localises to the cytoplasm. It carries out the reaction (6R)-5,10-methylene-5,6,7,8-tetrahydrofolate + NADP(+) = (6R)-5,10-methenyltetrahydrofolate + NADPH. The enzyme catalyses (6R)-5,10-methenyltetrahydrofolate + H2O = (6R)-10-formyltetrahydrofolate + H(+). The catalysed reaction is (6S)-5,6,7,8-tetrahydrofolate + formate + ATP = (6R)-10-formyltetrahydrofolate + ADP + phosphate. It functions in the pathway one-carbon metabolism; tetrahydrofolate interconversion. Functionally, trifunctional enzyme that catalyzes the interconversion of three forms of one-carbon-substituted tetrahydrofolate: (6R)-5,10-methylene-5,6,7,8-tetrahydrofolate, 5,10-methenyltetrahydrofolate and (6S)-10-formyltetrahydrofolate. These derivatives of tetrahydrofolate are differentially required in nucleotide and amino acid biosynthesis, (6S)-10-formyltetrahydrofolate being required for purine biosynthesis while (6R)-5,10-methylene-5,6,7,8-tetrahydrofolate is used for serine and methionine biosynthesis for instance. This is C-1-tetrahydrofolate synthase, cytoplasmic (Mthfd1) from Mus musculus (Mouse).